Consider the following 192-residue polypeptide: uncharacterized protein (192 aa).

Helical transmembrane passes span 5–22, 42–61, 66–88, 101–118, 122–139, and 159–181; these read VPPL…GIGL, FLFL…HYVY, LRFL…SGKL, WGLL…ALNL, LVMW…STIL, and ALLL…LWLF.

It is found in the cell membrane. This is an uncharacterized protein from Treponema pallidum (strain Nichols).